The chain runs to 45 residues: Small polypeptide DEVIL 2 (45 aa).

The interval 14-45 is required for DVL/RTFL small polypeptide activity; it reads SQSRRLGKYLKEQKGRIYIIRRCVMMLLCSHD. The chain crosses the membrane as a helical span at residues 17 to 33; that stretch reads RRLGKYLKEQKGRIYII.

The protein belongs to the DVL/RTFL small polypeptides family. In terms of tissue distribution, mostly expressed in stems and, to a lower extent, in roots and leaves.

The protein localises to the cell membrane. Its function is as follows. Small polypeptide acting as a regulatory molecule which coordinates cellular responses required for differentiation, growth and development, including leaves shape, pedicule elongation, inflorescence organization and fruit maturation, probably by restricting polar cell proliferation in lateral organs and coordinating socket cell recruitment and differentiation at trichome sites. This is Small polypeptide DEVIL 2 from Arabidopsis thaliana (Mouse-ear cress).